Consider the following 318-residue polypeptide: Protease HtpX homolog (318 aa).

A run of 3 helical transmembrane segments spans residues 1 to 21, 35 to 55, and 56 to 76; these read MLEA…VGRL, ILGL…GSAI, and AGLV…SRIV. Residue H167 coordinates Zn(2+). E168 is a catalytic residue. H171 serves as a coordination point for Zn(2+). The next 2 helical transmembrane spans lie at 178–198 and 209–229; these read LVMT…DPWL and IAFL…LVAA. E235 contributes to the Zn(2+) binding site.

The protein belongs to the peptidase M48B family. Requires Zn(2+) as cofactor.

It is found in the cell membrane. In Methanopyrus kandleri (strain AV19 / DSM 6324 / JCM 9639 / NBRC 100938), this protein is Protease HtpX homolog.